A 201-amino-acid polypeptide reads, in one-letter code: Small ribosomal subunit protein uS4 (201 aa).

The disordered stretch occupies residues 21–43 (GTGKELNRRPYAPGDHGQGRRQK). The S4 RNA-binding domain occupies 93 to 153 (RRLDNMVYRL…EKSKDMAIIK (61 aa)).

The protein belongs to the universal ribosomal protein uS4 family. As to quaternary structure, part of the 30S ribosomal subunit. Contacts protein S5. The interaction surface between S4 and S5 is involved in control of translational fidelity.

In terms of biological role, one of the primary rRNA binding proteins, it binds directly to 16S rRNA where it nucleates assembly of the body of the 30S subunit. Functionally, with S5 and S12 plays an important role in translational accuracy. The chain is Small ribosomal subunit protein uS4 from Levilactobacillus brevis (strain ATCC 367 / BCRC 12310 / CIP 105137 / JCM 1170 / LMG 11437 / NCIMB 947 / NCTC 947) (Lactobacillus brevis).